A 31-amino-acid chain; its full sequence is Cytochrome b6-f complex subunit 6 (31 aa).

The chain crosses the membrane as a helical span at residues 4-26 (ITSYFGFLLAASTITPALFIGLS).

It belongs to the PetL family. The 4 large subunits of the cytochrome b6-f complex are cytochrome b6, subunit IV (17 kDa polypeptide, PetD), cytochrome f and the Rieske protein, while the 4 small subunits are PetG, PetL, PetM and PetN. The complex functions as a dimer.

The protein localises to the plastid. Its subcellular location is the chloroplast thylakoid membrane. In terms of biological role, component of the cytochrome b6-f complex, which mediates electron transfer between photosystem II (PSII) and photosystem I (PSI), cyclic electron flow around PSI, and state transitions. PetL is important for photoautotrophic growth as well as for electron transfer efficiency and stability of the cytochrome b6-f complex. The protein is Cytochrome b6-f complex subunit 6 of Buxus microphylla (Littleleaf boxwood).